The chain runs to 67 residues: Probable Sec-independent protein translocase protein TatE (67 aa).

The chain crosses the membrane as a helical span at residues 4–21 (ISITKLLVVAALVVLLFG).

This sequence belongs to the TatA/E family. TatE subfamily.

Its subcellular location is the cell inner membrane. Functionally, part of the twin-arginine translocation (Tat) system that transports large folded proteins containing a characteristic twin-arginine motif in their signal peptide across membranes. TatE shares overlapping functions with TatA. This Salmonella arizonae (strain ATCC BAA-731 / CDC346-86 / RSK2980) protein is Probable Sec-independent protein translocase protein TatE.